Here is a 648-residue protein sequence, read N- to C-terminus: Rho GTPase-activating protein 25 (648 aa).

Residues 46 to 151 (RPIKVGWLKK…WVKFLRRVAG (106 aa)) form the PH domain. One can recognise a Rho-GAP domain in the interval 160–354 (QRLDETVAYE…MMIRDHEVLF (195 aa)). The interval 356-559 (KSKDAPISPP…DLDSLQRTVQ (204 aa)) is disordered. Phosphoserine occurs at positions 363, 396, and 403. Residues 393–410 (RTDSFSNTASSPDATSPT) show a composition bias toward polar residues. Thr407 bears the Phosphothreonine mark. Residues 417-431 (QHQEDSGKAPRENPG) show a composition bias toward basic and acidic residues. Composition is skewed to polar residues over residues 453-462 (SAFQGTTSSK) and 497-515 (DQRT…SQGN). Ser537 is modified (phosphoserine). A coiled-coil region spans residues 540–641 (EAGSKNSGED…VKEFVKSMEK (102 aa)).

Its function is as follows. GTPase activator for the Rho-type GTPases by converting them to an inactive GDP-bound state. This chain is Rho GTPase-activating protein 25 (Arhgap25), found in Mus musculus (Mouse).